The chain runs to 202 residues: Imidazoleglycerol-phosphate dehydratase (202 aa).

It belongs to the imidazoleglycerol-phosphate dehydratase family.

Its subcellular location is the cytoplasm. It catalyses the reaction D-erythro-1-(imidazol-4-yl)glycerol 3-phosphate = 3-(imidazol-4-yl)-2-oxopropyl phosphate + H2O. It functions in the pathway amino-acid biosynthesis; L-histidine biosynthesis; L-histidine from 5-phospho-alpha-D-ribose 1-diphosphate: step 6/9. The chain is Imidazoleglycerol-phosphate dehydratase from Chelativorans sp. (strain BNC1).